We begin with the raw amino-acid sequence, 491 residues long: Ketol-acid reductoisomerase (NADP(+)) (491 aa).

In terms of domain architecture, KARI N-terminal Rossmann spans 15-208 (AQLGKCRFMG…GGHRAGVLES (194 aa)). Residues 45 to 48 (CGAQ), R68, R76, S78, and 108 to 110 (DKQ) each bind NADP(+). Residue H132 is part of the active site. G158 is an NADP(+) binding site. 2 KARI C-terminal knotted domains span residues 209-344 (SFVA…TAPQ) and 345-484 (YEGK…MTDM). 4 residues coordinate Mg(2+): D217, E221, E389, and E393. S414 lines the substrate pocket.

This sequence belongs to the ketol-acid reductoisomerase family. It depends on Mg(2+) as a cofactor.

It carries out the reaction (2R)-2,3-dihydroxy-3-methylbutanoate + NADP(+) = (2S)-2-acetolactate + NADPH + H(+). The enzyme catalyses (2R,3R)-2,3-dihydroxy-3-methylpentanoate + NADP(+) = (S)-2-ethyl-2-hydroxy-3-oxobutanoate + NADPH + H(+). Its pathway is amino-acid biosynthesis; L-isoleucine biosynthesis; L-isoleucine from 2-oxobutanoate: step 2/4. It participates in amino-acid biosynthesis; L-valine biosynthesis; L-valine from pyruvate: step 2/4. Involved in the biosynthesis of branched-chain amino acids (BCAA). Catalyzes an alkyl-migration followed by a ketol-acid reduction of (S)-2-acetolactate (S2AL) to yield (R)-2,3-dihydroxy-isovalerate. In the isomerase reaction, S2AL is rearranged via a Mg-dependent methyl migration to produce 3-hydroxy-3-methyl-2-ketobutyrate (HMKB). In the reductase reaction, this 2-ketoacid undergoes a metal-dependent reduction by NADPH to yield (R)-2,3-dihydroxy-isovalerate. This is Ketol-acid reductoisomerase (NADP(+)) from Shigella flexneri.